Reading from the N-terminus, the 248-residue chain is 3-deoxy-manno-octulosonate cytidylyltransferase (248 aa).

This sequence belongs to the KdsB family.

It localises to the cytoplasm. The enzyme catalyses 3-deoxy-alpha-D-manno-oct-2-ulosonate + CTP = CMP-3-deoxy-beta-D-manno-octulosonate + diphosphate. Its pathway is nucleotide-sugar biosynthesis; CMP-3-deoxy-D-manno-octulosonate biosynthesis; CMP-3-deoxy-D-manno-octulosonate from 3-deoxy-D-manno-octulosonate and CTP: step 1/1. The protein operates within bacterial outer membrane biogenesis; lipopolysaccharide biosynthesis. Functionally, activates KDO (a required 8-carbon sugar) for incorporation into bacterial lipopolysaccharide in Gram-negative bacteria. This chain is 3-deoxy-manno-octulosonate cytidylyltransferase, found in Desulfosudis oleivorans (strain DSM 6200 / JCM 39069 / Hxd3) (Desulfococcus oleovorans).